A 179-amino-acid chain; its full sequence is Large ribosomal subunit protein uL6 (179 aa).

The protein belongs to the universal ribosomal protein uL6 family. In terms of assembly, part of the 50S ribosomal subunit.

Its function is as follows. This protein binds to the 23S rRNA, and is important in its secondary structure. It is located near the subunit interface in the base of the L7/L12 stalk, and near the tRNA binding site of the peptidyltransferase center. The sequence is that of Large ribosomal subunit protein uL6 from Prochlorococcus marinus (strain MIT 9312).